A 263-amino-acid polypeptide reads, in one-letter code: Bradykinin-potentiating and C-type natriuretic peptides (263 aa).

Residues 1–23 (MFVSRLAASGLLLLALMALSLDG) form the signal peptide. A propeptide spanning residues 24 to 30 (KPVQQWS) is cleaved from the precursor. Gln-31 is modified (pyrrolidone carboxylic acid). A propeptide spanning residues 42–48 (LVVQQWS) is cleaved from the precursor. Gln-49 carries the post-translational modification Pyrrolidone carboxylic acid. The propeptide occupies 60-66 (LVVQQWS). Gln-67 carries the post-translational modification Pyrrolidone carboxylic acid. A propeptide spanning residues 78-84 (LVVQQWS) is cleaved from the precursor. Pyrrolidone carboxylic acid is present on Gln-85. The angiotensin-converting enzyme active site binding stretch occupies residues 89–95 (PRPKIPP). A propeptide spanning residues 96–102 (LVVQQWS) is cleaved from the precursor. At Gln-103 the chain carries Pyrrolidone carboxylic acid. The segment at 107-113 (PRPKIPP) is angiotensin-converting enzyme active site binding. Residues 114-116 (LVV) constitute a propeptide that is removed on maturation. Gln-117 is subject to Pyrrolidone carboxylic acid. The propeptide occupies 128-130 (LLL). Gln-131 is modified (pyrrolidone carboxylic acid). Residues 137–241 (AGGTTALREE…ARRLKGLVKK (105 aa)) constitute a propeptide that is removed on maturation. Disordered stretches follow at residues 152 to 171 (EAAS…GSKA) and 177 to 205 (RLSK…GKQA). Positions 181 to 192 (SKGASATSASAS) are enriched in low complexity. Basic and acidic residues predominate over residues 194 to 204 (PMRDLRTDGKQ). An intrachain disulfide couples Cys-247 to Cys-263.

In the N-terminal section; belongs to the bradykinin-potentiating peptide family. It in the C-terminal section; belongs to the natriuretic peptide family. Expressed by the venom gland.

It localises to the secreted. Its function is as follows. Inhibits the rabbit lung angiotensin-converting enzyme (ACE) (IC(50)=15 uM). Contracts the rat gastric fundus smooth muscle in a rapid and transient manner. In terms of biological role, causes no contraction of the rat gastric fundus smooth muscle even at high concentrations. Causes very weak contraction of the isolated guinea pig ileum. Causes weak contraction on rat uterus. Functionally, inhibits the activity of the angiotensin-converting enzyme (ACE) by a preferential interaction with its C-domain (Ki=30 nM, IC(50)=1.1 uM). It binds ACE in a zinc-independent manner. Also potentiates the hypotensive effects of bradykinin. Causes high contraction of the isolated guinea pig ileum and weak contraction on rat uterus. Inhibits the activity of the angiotensin-converting enzyme (ACE) by interacting with the same potency to its C- and N-domains. Inhibits the rabbit lung angiotensin-converting enzyme (ACE) (IC(50)=7.1 uM). Causes weak contraction of the isolated guinea pig ileum. Causes weak contraction on rat uterus. Its function is as follows. Inhibits the rabbit lung angiotensin-converting enzyme (ACE) (IC(50)=46 uM). Synthetic Leu3-blomhotin contracts the rat gastric fundus smooth muscle in a rapid and transient manner. Causes moderate contraction of the isolated guinea pig ileum. Causes weak contraction on rat uterus. In terms of biological role, causes weak contraction of the isolated guinea pig ileum. Causes about 50-fold more potentiating activity on rat uterus than on guinea pig ileum. Functionally, synthetic peptide potentiates the bradykinin in vivo. Synthetic peptide does not show any bradykinin-potentiating effects. Its function is as follows. has a vasorelaxant activity in rat aortic strips and a diuretic potency in anesthetized rats. May act by activating natriuretic receptors (NPR1 and/or NPR2). The polypeptide is Bradykinin-potentiating and C-type natriuretic peptides (Gloydius blomhoffii (Mamushi)).